We begin with the raw amino-acid sequence, 102 residues long: Co-chaperonin GroES (102 aa).

It belongs to the GroES chaperonin family. Heptamer of 7 subunits arranged in a ring. Interacts with the chaperonin GroEL.

The protein resides in the cytoplasm. Functionally, together with the chaperonin GroEL, plays an essential role in assisting protein folding. The GroEL-GroES system forms a nano-cage that allows encapsulation of the non-native substrate proteins and provides a physical environment optimized to promote and accelerate protein folding. GroES binds to the apical surface of the GroEL ring, thereby capping the opening of the GroEL channel. This is Co-chaperonin GroES from Chlamydia trachomatis serovar L2 (strain ATCC VR-902B / DSM 19102 / 434/Bu).